We begin with the raw amino-acid sequence, 146 residues long: Ribonuclease H (146 aa).

The RNase H type-1 domain occupies M1–K143. D10, E48, D70, and D135 together coordinate Mg(2+).

Belongs to the RNase H family. As to quaternary structure, monomer. Mg(2+) is required as a cofactor.

It localises to the cytoplasm. It catalyses the reaction Endonucleolytic cleavage to 5'-phosphomonoester.. Endonuclease that specifically degrades the RNA of RNA-DNA hybrids. The protein is Ribonuclease H of Chlorobaculum parvum (strain DSM 263 / NCIMB 8327) (Chlorobium vibrioforme subsp. thiosulfatophilum).